The primary structure comprises 276 residues: MALQLNGVAVVTGAGSGIGKAVALAYAAEGARGVVIADLNLEAALQTARESESIATSPTYRALPVAVDVTDEKSVDRMVTAAVQAFDRIDYSVNSAGIGVKHHKPVYKAEVSEMNAFWQVNVLGTLNCIKSVTKVMKSQSVSTLNKQGKSRQVGRGVILNVGSCNSYIATPDIVPYTTTKHAVMGLTKSAALDLAPHEIRVNAICPGWVNTPMVTAAINGNPDLPEMMRTIIPMSRIAEPEEIADVVLFMTSPRSSYVTGVGWVVDGGTTLQVQTC.

The NADP(+) site is built by Ile18, Asp68, Lys130, Tyr176, Lys180, Val209, and Thr211. Tyr176 acts as the Proton acceptor in catalysis. Residue Tyr176 is the Proton donor of the active site. Lys180 functions as the Lowers pKa of active site Tyr in the catalytic mechanism.

Belongs to the short-chain dehydrogenases/reductases (SDR) family.

It catalyses the reaction (2R,9S)-annullatin H + A = (2R)-annullatin F + AH2. Cytochrome P450 monooxygenase; part of the gene cluster that mediates the biosynthesis of annullatin D, an alkylated aromatic polyketide with a fused dihydrobenzofuran lactone ring system that exhibits potent agonistic activities toward the cannabinoid receptors. Within the pathway, anuF is involved in the formation of (2R)-annullatin F from the diastereomer of (2S,9S)-annullatin H (compound 12). The annullatin backbone 2-hydroxymethyl-3-pentylphenol is assembled from one acetyl-CoA starter unit and 5 malonyl-CoA elongation units by cooperation of the highly reducing polyketide synthase anuA, the short-chain dehydrogenase anuB and the oxidoreductase anuC, before being hydroxylated at the C-5 alkyl chain by the cytochrome P450 monooxygenase anuE to form (8S)-annullatin E. The prenyltransferase anuH subsequently installs one isoprenyl group at the benzene ring to form (8S)-annullatin J. Enzymatic or nonenzymatic dihydro-benzofuran ring formation between the prenyl and the phenolic hydroxyl groups in (8S)-annullatin J results in two diastereomers (2S,9S)-annullatin H and compound 12. The intermediate (2S,9S)-annullatin H is then converted to (2S,9S)-annullatin D by the FAD-linked oxidoreductase anuG-catalyzed five-member lactone ring formation. The isomer 12 acts as a substrate for the short-chain dehydrogenase anuF and is oxidized to (2R)-annullatin F, which is subsequently acetylated by an acetyltransferase leading to (2R)-annullatin G formation. The remaining enzymes identified within the cluster, anuD, anuI and anuJ, seem not to be involved in annullatin biosynthesis. The chain is Short-chain dehydrogenase anuF from Penicillium roqueforti (strain FM164).